The primary structure comprises 497 residues: Glycerol kinase (497 aa).

Thr-12 serves as a coordination point for ADP. The ATP site is built by Thr-12, Thr-13, and Ser-14. Thr-12 is a sn-glycerol 3-phosphate binding site. Arg-16 is an ADP binding site. Positions 82, 83, 133, and 243 each coordinate sn-glycerol 3-phosphate. Residues Arg-82, Glu-83, Tyr-133, Asp-243, and Gln-244 each coordinate glycerol. 2 residues coordinate ADP: Thr-265 and Gly-308. Residues Thr-265, Gly-308, Gln-312, and Gly-409 each coordinate ATP. Gly-409 contributes to the ADP binding site.

The protein belongs to the FGGY kinase family.

The enzyme catalyses glycerol + ATP = sn-glycerol 3-phosphate + ADP + H(+). The protein operates within polyol metabolism; glycerol degradation via glycerol kinase pathway; sn-glycerol 3-phosphate from glycerol: step 1/1. Inhibited by fructose 1,6-bisphosphate (FBP). Its function is as follows. Key enzyme in the regulation of glycerol uptake and metabolism. Catalyzes the phosphorylation of glycerol to yield sn-glycerol 3-phosphate. The chain is Glycerol kinase from Dichelobacter nodosus (strain VCS1703A).